A 317-amino-acid polypeptide reads, in one-letter code: MPMQEPQRRLLDPFNSTRTGTPHLKLSANQTGPWCLHVSIPDGLFLSLGLVSLVENVLVVISIAKNRNLHSPMYYFICCLALSDLLVSVSIVLETTLILVLEAGALATRVTVVQQLDNVIDVLICGSMVSSLCFLGAIAVDRYISIFYALRYHSIVTLPRARWAIVAIWVASISSSTLFVAYYNHTAVLLCLVTFFLATLALMAVLYVHMLARAHQHAQAIAQLHKRQHLVHQGFRLKGAATLTILLGIFFLCWGPFFLYLTLIVLCPKHPTCSCFFKNLNLFLALIIFNSIVDPLIYAFRSQELRMTLKEVLLCSW.

Residues 1–37 (MPMQEPQRRLLDPFNSTRTGTPHLKLSANQTGPWCLH) are Extracellular-facing. N-linked (GlcNAc...) asparagine glycosylation is found at Asn15 and Asn29. A helical transmembrane segment spans residues 38 to 63 (VSIPDGLFLSLGLVSLVENVLVVISI). The Cytoplasmic segment spans residues 64–72 (AKNRNLHSP). Residues 73–93 (MYYFICCLALSDLLVSVSIVL) form a helical membrane-spanning segment. At 94–118 (ETTLILVLEAGALATRVTVVQQLDN) the chain is on the extracellular side. The helical transmembrane segment at 119 to 140 (VIDVLICGSMVSSLCFLGAIAV) threads the bilayer. Over 141–163 (DRYISIFYALRYHSIVTLPRARW) the chain is Cytoplasmic. Residues 164–183 (AIVAIWVASISSSTLFVAYY) form a helical membrane-spanning segment. Over 184–191 (NHTAVLLC) the chain is Extracellular. Residues 192–211 (LVTFFLATLALMAVLYVHML) traverse the membrane as a helical segment. The Cytoplasmic segment spans residues 212–240 (ARAHQHAQAIAQLHKRQHLVHQGFRLKGA). Residues 241 to 266 (ATLTILLGIFFLCWGPFFLYLTLIVL) traverse the membrane as a helical segment. The Extracellular segment spans residues 267–279 (CPKHPTCSCFFKN). A helical transmembrane segment spans residues 280 to 300 (LNLFLALIIFNSIVDPLIYAF). The Cytoplasmic segment spans residues 301–317 (RSQELRMTLKEVLLCSW). Residue Cys315 is the site of S-palmitoyl cysteine attachment.

This sequence belongs to the G-protein coupled receptor 1 family. Interacts with MGRN1, but does not undergo MGRN1-mediated ubiquitination; this interaction competes with GNAS-binding and thus inhibits agonist-induced cAMP production. Interacts with OPN3; the interaction results in a decrease in MC1R-mediated cAMP signaling and ultimately a decrease in melanin production in melanocytes.

It localises to the cell membrane. Functionally, receptor for MSH (alpha, beta and gamma) and ACTH. The activity of this receptor is mediated by G proteins which activate adenylate cyclase. Mediates melanogenesis, the production of eumelanin (black/brown) and phaeomelanin (red/yellow), via regulation of cAMP signaling in melanocytes. The polypeptide is Melanocyte-stimulating hormone receptor (MC1R) (Chaetodipus baileyi (Bailey's pocket mouse)).